The sequence spans 166 residues: Photosystem I assembly protein Ycf3 (166 aa).

TPR repeat units lie at residues 35 to 68 (AFTY…EIDA), 72 to 105 (SYML…NPRL), and 120 to 153 (GEQA…SPTS).

The protein belongs to the Ycf3 family.

The protein localises to the plastid. It localises to the chloroplast thylakoid membrane. Functionally, essential for the assembly of the photosystem I (PSI) complex. May act as a chaperone-like factor to guide the assembly of the PSI subunits. The chain is Photosystem I assembly protein Ycf3 from Bigelowiella natans (Pedinomonas minutissima).